We begin with the raw amino-acid sequence, 293 residues long: Bifunctional protein FolD (293 aa).

Residues 165 to 167 (GRS), Ser-190, and Ile-231 contribute to the NADP(+) site.

It belongs to the tetrahydrofolate dehydrogenase/cyclohydrolase family. In terms of assembly, homodimer.

It catalyses the reaction (6R)-5,10-methylene-5,6,7,8-tetrahydrofolate + NADP(+) = (6R)-5,10-methenyltetrahydrofolate + NADPH. The catalysed reaction is (6R)-5,10-methenyltetrahydrofolate + H2O = (6R)-10-formyltetrahydrofolate + H(+). It functions in the pathway one-carbon metabolism; tetrahydrofolate interconversion. Functionally, catalyzes the oxidation of 5,10-methylenetetrahydrofolate to 5,10-methenyltetrahydrofolate and then the hydrolysis of 5,10-methenyltetrahydrofolate to 10-formyltetrahydrofolate. The sequence is that of Bifunctional protein FolD from Synechococcus sp. (strain CC9902).